A 1383-amino-acid polypeptide reads, in one-letter code: Negative regulator of sporulation MDS3 (1383 aa).

Kelch repeat units follow at residues 124 to 179 (CLYL…SPRF), 199 to 246 (GLFI…KDKE), and 356 to 402 (QNVV…WGGF). Residues 450 to 460 (GRSNNRTSSFV) are compositionally biased toward polar residues. 7 disordered regions span residues 450–506 (GRSN…VLDA), 625–644 (NQRL…DIPK), 653–825 (LLSS…DLFS), 858–884 (LDSF…SDES), 1063–1114 (NNSR…VDKE), 1251–1289 (QLKE…RLPQ), and 1321–1369 (SMTD…KSSS). Low complexity predominate over residues 631–644 (KSSNSESSSSDIPK). Basic and acidic residues predominate over residues 693-707 (VNREEGSDCSKDRKT). 3 stretches are compositionally biased toward low complexity: residues 726-758 (NSTS…EQIP), 803-815 (ESPF…SMSG), and 858-874 (LDSF…VSSV). Positions 1084-1094 (EGEKQEEIVSK) are enriched in basic and acidic residues. A compositionally biased stretch (low complexity) spans 1251–1280 (QLKESQLQSKSSPIIPTVSTVTPSPLPSIS). Positions 1341–1352 (LQQTMLSRTPTN) are enriched in polar residues.

As to quaternary structure, interacts with SIT4.

It localises to the cytoplasm. Negatively regulates early sporulation-specific genes. TOR signaling pathway component that contributes to morphogenesis as a regulator of this key morphogenetic pathway. Required for growth and hyphal formation at pH 9, for full virulence in a mouse model of systemic infection and for biofilm formation. Involved in chlamydospore formation, distinctive morphological feature of the fungal pathogen C.albicans that can be induced to form in oxygen-limited environments and has been reported in clinical specimens. This is Negative regulator of sporulation MDS3 (MDS3) from Candida albicans (strain SC5314 / ATCC MYA-2876) (Yeast).